A 689-amino-acid chain; its full sequence is Glycine--tRNA ligase beta subunit (689 aa).

Belongs to the class-II aminoacyl-tRNA synthetase family. Tetramer of two alpha and two beta subunits.

It localises to the cytoplasm. The enzyme catalyses tRNA(Gly) + glycine + ATP = glycyl-tRNA(Gly) + AMP + diphosphate. The sequence is that of Glycine--tRNA ligase beta subunit from Yersinia enterocolitica serotype O:8 / biotype 1B (strain NCTC 13174 / 8081).